The primary structure comprises 445 residues: Chromosomal replication initiator protein DnaA (445 aa).

Residues 1–71 (MEEVWLQAQS…SVQSLTDSQT (71 aa)) are domain I, interacts with DnaA modulators. Residues 71-108 (TKIELLIAKPKTEKPKQPAASEVTAAEPEACSGPDHST) are domain II. The interval 83–106 (EKPKQPAASEVTAAEPEACSGPDH) is disordered. A domain III, AAA+ region region spans residues 109–325 (NLNPKYTFDT…GMLIRLGAVS (217 aa)). Positions 153, 155, 156, and 157 each coordinate ATP. The segment at 326–445 (SLTGKNITLD…VDTLRKGLLS (120 aa)) is domain IV, binds dsDNA.

It belongs to the DnaA family. In terms of assembly, oligomerizes as a right-handed, spiral filament on DNA at oriC.

The protein localises to the cytoplasm. Its function is as follows. Plays an essential role in the initiation and regulation of chromosomal replication. ATP-DnaA binds to the origin of replication (oriC) to initiate formation of the DNA replication initiation complex once per cell cycle. Binds the DnaA box (a 9 base pair repeat at the origin) and separates the double-stranded (ds)DNA. Forms a right-handed helical filament on oriC DNA; dsDNA binds to the exterior of the filament while single-stranded (ss)DNA is stabiized in the filament's interior. The ATP-DnaA-oriC complex binds and stabilizes one strand of the AT-rich DNA unwinding element (DUE), permitting loading of DNA polymerase. After initiation quickly degrades to an ADP-DnaA complex that is not apt for DNA replication. Binds acidic phospholipids. This chain is Chromosomal replication initiator protein DnaA, found in Geobacter sulfurreducens (strain ATCC 51573 / DSM 12127 / PCA).